Consider the following 328-residue polypeptide: Acyl-CoA wax alcohol acyltransferase 1 (328 aa).

The next 2 membrane-spanning stretches (helical) occupy residues 12–32 (SLML…LQPL) and 34–53 (VYLL…AWLF).

This sequence belongs to the diacylglycerol acyltransferase family. Predominantly expressed in skin, where it is limited to the sebaceous gland. Expressed in more mature, centrally located cells just before their rupture and sebum release. Also expressed in all tissues except spleen. Expressed at higher level in thymus, prostate and testis.

Its subcellular location is the endoplasmic reticulum membrane. It catalyses the reaction a long chain fatty alcohol + a fatty acyl-CoA = a wax ester + CoA. It carries out the reaction 1,2-di-(9Z-octadecenoyl)-sn-glycerol + (9Z)-octadecenoyl-CoA = 1,2,3-tri-(9Z-octadecenoyl)-glycerol + CoA. The enzyme catalyses hexadecan-1-ol + (9Z)-octadecenoyl-CoA = hexadecanyl (9Z)-octadecenoate + CoA. The catalysed reaction is decan-1-ol + (9Z)-octadecenoyl-CoA = 1-O-decyl-(9Z)-octadecenoate + CoA. It catalyses the reaction (9Z)-hexadecen-1-ol + (9Z)-octadecenoyl-CoA = 1-O-(9Z)-hexadecenyl (9Z)-octadecenoate + CoA. It carries out the reaction octadecan-1-ol + (9Z)-octadecenoyl-CoA = 1-O-octadecyl (9Z)-octadecenoate + CoA. The enzyme catalyses (9Z)-octadecen-1-ol + (9Z)-octadecenoyl-CoA = 1-O-(9Z)-octadecenyl (9Z)-octadecenoate + CoA. The catalysed reaction is hexadecan-1-ol + hexadecanoyl-CoA = hexadecanyl hexadecanoate + CoA. It catalyses the reaction hexadecan-1-ol + (9Z)-hexadecenoyl-CoA = 1-O-hexadecyl (9Z)-hexadecenoate + CoA. It carries out the reaction hexadecan-1-ol + octadecanoyl-CoA = hexadecanyl octadecanoate + CoA. The enzyme catalyses eicosan-1-ol + (9Z)-octadecenoyl-CoA = 1-O-eicosanyl (9Z)-octadecenoate + CoA. Its function is as follows. Acyltransferase that catalyzes the formation of ester bonds between fatty alcohols and fatty acyl-CoAs to form wax monoesters. Shows a strong preference for decyl alcohol (C10), with less activity towards C16 and C18 alcohols. Shows a strong preference for saturated acyl-CoAs. This Homo sapiens (Human) protein is Acyl-CoA wax alcohol acyltransferase 1 (AWAT1).